Reading from the N-terminus, the 415-residue chain is Histone acetyltransferase type B subunit 2 (415 aa).

WD repeat units follow at residues Glu118 to Ile158, Pro163 to Leu203, Thr211 to Ser251, Pro256 to Ala296, and Gly307 to Ala347. The interval Glu349–Asp353 is interaction with the histone H4 N-terminus. The stretch at Gly364–Glu404 is one WD 6 repeat.

The protein belongs to the WD repeat RBAP46/RBAP48/MSI1 family. In terms of assembly, component of the HAT-B complex composed of at least HAT1 and HAT2. The HAT-B complex binds to histone H4 tail.

The protein resides in the cytoplasm. Its subcellular location is the nucleus. Its function is as follows. Regulatory subunit of the histone acetylase B (HAT-B) complex. The complex acetylates 'Lys-12' of histone H4 which is required for telomeric silencing. This is Histone acetyltransferase type B subunit 2 (HAT2) from Debaryomyces hansenii (strain ATCC 36239 / CBS 767 / BCRC 21394 / JCM 1990 / NBRC 0083 / IGC 2968) (Yeast).